The chain runs to 160 residues: Succinate dehydrogenase assembly factor 2-A, mitochondrial (160 aa).

The N-terminal 30 residues, 1 to 30 (MLRQLKLTLNISRWIFMPWQRQASASSSQV), are a transit peptide targeting the mitochondrion.

The protein belongs to the SDHAF2 family. As to quaternary structure, interacts with the flavoprotein subunit within the SDH catalytic dimer.

It is found in the mitochondrion matrix. Its function is as follows. Plays an essential role in the assembly of succinate dehydrogenase (SDH), an enzyme complex (also referred to as respiratory complex II) that is a component of both the tricarboxylic acid (TCA) cycle and the mitochondrial electron transport chain, and which couples the oxidation of succinate to fumarate with the reduction of ubiquinone (coenzyme Q) to ubiquinol. Required for flavinylation (covalent attachment of FAD) of the flavoprotein subunit of the SDH catalytic dimer. The chain is Succinate dehydrogenase assembly factor 2-A, mitochondrial from Drosophila persimilis (Fruit fly).